The primary structure comprises 303 residues: Probable 5-dehydro-4-deoxyglucarate dehydratase (303 aa).

Belongs to the DapA family.

It carries out the reaction 5-dehydro-4-deoxy-D-glucarate + H(+) = 2,5-dioxopentanoate + CO2 + H2O. It participates in carbohydrate acid metabolism; D-glucarate degradation; 2,5-dioxopentanoate from D-glucarate: step 2/2. The chain is Probable 5-dehydro-4-deoxyglucarate dehydratase from Acinetobacter baylyi (strain ATCC 33305 / BD413 / ADP1).